Here is a 170-residue protein sequence, read N- to C-terminus: Large ribosomal subunit protein bL17 (170 aa).

Belongs to the bacterial ribosomal protein bL17 family. Part of the 50S ribosomal subunit. Contacts protein L32.

This Azobacteroides pseudotrichonymphae genomovar. CFP2 protein is Large ribosomal subunit protein bL17.